Consider the following 294-residue polypeptide: ATP synthase gamma chain (294 aa).

The protein belongs to the ATPase gamma chain family. In terms of assembly, F-type ATPases have 2 components, CF(1) - the catalytic core - and CF(0) - the membrane proton channel. CF(1) has five subunits: alpha(3), beta(3), gamma(1), delta(1), epsilon(1). CF(0) has three main subunits: a, b and c.

It is found in the cell inner membrane. Produces ATP from ADP in the presence of a proton gradient across the membrane. The gamma chain is believed to be important in regulating ATPase activity and the flow of protons through the CF(0) complex. The chain is ATP synthase gamma chain from Paraburkholderia xenovorans (strain LB400).